Consider the following 215-residue polypeptide: Probable septum site-determining protein MinC (215 aa).

This sequence belongs to the MinC family. Interacts with MinD and FtsZ.

In terms of biological role, cell division inhibitor that blocks the formation of polar Z ring septums. Rapidly oscillates between the poles of the cell to destabilize FtsZ filaments that have formed before they mature into polar Z rings. Prevents FtsZ polymerization. The polypeptide is Probable septum site-determining protein MinC (Clostridium botulinum (strain Alaska E43 / Type E3)).